The primary structure comprises 56 residues: MGHSNVWNSHPKNYGAGSRVCRVCGNSHGLIRKYGLMCCRQCFRSDAKDIGFIKYR.

Residues Cys-21, Cys-24, Cys-39, and Cys-42 each contribute to the Zn(2+) site.

Belongs to the universal ribosomal protein uS14 family. Zn(2+) serves as cofactor.

The protein is Small ribosomal subunit protein uS14 (RPS29) of Triticum aestivum (Wheat).